The chain runs to 78 residues: Ferredoxin oxidoreductase 2 subunit ForD (78 aa).

4Fe-4S ferredoxin-type domains are found at residues 3–35 (FVAD…FKAS) and 37–66 (NSAW…HCIE). [4Fe-4S] cluster contacts are provided by cysteine 12, cysteine 17, cysteine 20, cysteine 24, cysteine 46, cysteine 49, cysteine 52, and cysteine 56.

In terms of assembly, heterotetramer of one alpha, one beta, one delta and one gamma chain. The cofactor is [4Fe-4S] cluster.

This Aquifex aeolicus (strain VF5) protein is Ferredoxin oxidoreductase 2 subunit ForD (forD2).